The primary structure comprises 130 residues: Protein ApaG (130 aa).

The 125-residue stretch at 3 to 127 (RAVTRHIEVT…FSLDSPDGKR (125 aa)) folds into the ApaG domain.

This Bradyrhizobium sp. (strain ORS 278) protein is Protein ApaG.